The sequence spans 549 residues: RNA-induced transcriptional silencing complex protein tas3 (549 aa).

5 disordered regions span residues 89-111, 126-184, 202-225, 298-361, and 381-430; these read KNSP…VRAS, DGKE…SDSI, IRSS…SSKS, LDNF…HLEK, and AHFH…PLAS. Positions 298–307 are enriched in polar residues; it reads LDNFNRPSQQ. 2 stretches are compositionally biased toward basic and acidic residues: residues 328–361 and 403–416; these read YDSY…HLEK and SDRQ…ELPT. Polar residues predominate over residues 419 to 430; that stretch reads LNASDSHNPLAS.

As to quaternary structure, ago1, chp1 and tas3 interact to form the core of the RNA-induced transcriptional silencing (RITS) complex. The RITS complex interacts with the RDRC complex via interaction between ago1 and hrr1. Clr4 has a role in mediating this interaction.

It is found in the nucleus. The protein localises to the cytoplasm. Its subcellular location is the cytoskeleton. It localises to the microtubule organizing center. The protein resides in the spindle pole body. Functionally, has a role in the RNA interference (RNAi) pathway which is important for heterochromatin formation and accurate chromosome segregation. A member of the RNA-induced transcriptional silencing (RITS) complex which is involved in the biosynthesis of dsRNA from primer siRNAs provided by the RNA-directed RNA polymerase (RDRC) complex. This is RNA-induced transcriptional silencing complex protein tas3 (tas3) from Schizosaccharomyces pombe (strain 972 / ATCC 24843) (Fission yeast).